Reading from the N-terminus, the 646-residue chain is Centrosomal protein of 72 kDa (646 aa).

3 LRR repeats span residues Glu28–Leu49, Ala54–Val75, and Ser76–His97. The region spanning Asn110–His149 is the LRRCT domain. Phosphoserine occurs at positions 117 and 236. 2 disordered regions span residues Ser300–Val342 and Gly357–Arg399. Residues Ala307–Lys319 are compositionally biased toward low complexity. Position 380 is a phosphoserine (Ser380). Over residues Glu383–Ser392 the composition is skewed to basic and acidic residues. Residue Ser402 is modified to Phosphoserine. The stretch at Leu476–Ser622 forms a coiled coil.

This sequence belongs to the CEP72 family. In terms of assembly, interacts with KIZ, PCM1 and CDK5RAP2.

The protein resides in the cytoplasm. The protein localises to the cytoskeleton. It is found in the microtubule organizing center. Its subcellular location is the centrosome. It localises to the centriolar satellite. In terms of biological role, involved in the recruitment of key centrosomal proteins to the centrosome. Provides centrosomal microtubule-nucleation activity on the gamma-tubulin ring complexes (gamma-TuRCs) and has critical roles in forming a focused bipolar spindle, which is needed for proper tension generation between sister chromatids. Required for localization of KIZ, AKAP9 and gamma-tubulin ring complexes (gamma-TuRCs). Involved in centriole duplication. Required for CDK5RAP22, CEP152, WDR62 and CEP63 centrosomal localization and promotes the centrosomal localization of CDK2. The chain is Centrosomal protein of 72 kDa (Cep72) from Mus musculus (Mouse).